A 583-amino-acid polypeptide reads, in one-letter code: Orphan steroid hormone receptor 2 (583 aa).

Residues 84 to 159 constitute a DNA-binding region (nuclear receptor); that stretch reads IELCAVCGDK…MGMKSDSVQC (76 aa). 2 NR C4-type zinc fingers span residues 87 to 107 and 123 to 142; these read CAVC…CEGC and CRGN…CQYC. The NR LBD domain maps to 248–563; the sequence is TLASVVTSLA…SIIPYILRME (316 aa).

It belongs to the nuclear hormone receptor family. NR2 subfamily. As to quaternary structure, binds DNA as a monomer. In terms of tissue distribution, expressed uniformly in the early embryo. In contrast, larval expression is localized to the epaulettes and mouth epithelium. Expressed in multiple adult organs including lantern muscle, tubefeet, intestine, coelomocytes and gonads. In the adult ovaries and testes, expression is specifically localized to the smooth muscle epithelial layer of cells which surround the ovarioles and acini, respectively (at protein level).

It is found in the cytoplasm. It localises to the nucleus. Its function is as follows. Orphan nuclear receptor. Binds to the hormone response element in the upstream promoter region of the CYIIIB gene in vitro. Both isoform 1 and isoform 2 bind DNA. The chain is Orphan steroid hormone receptor 2 from Strongylocentrotus purpuratus (Purple sea urchin).